We begin with the raw amino-acid sequence, 89 residues long: Small ribosomal subunit protein uS15 (89 aa).

A compositionally biased stretch (basic and acidic residues) spans 1-10 (MPLNTEKKQE). The segment at 1 to 22 (MPLNTEKKQELINSHQTHATDT) is disordered. A compositionally biased stretch (polar residues) spans 11-22 (LINSHQTHATDT).

The protein belongs to the universal ribosomal protein uS15 family. Part of the 30S ribosomal subunit. Forms a bridge to the 50S subunit in the 70S ribosome, contacting the 23S rRNA.

Functionally, one of the primary rRNA binding proteins, it binds directly to 16S rRNA where it helps nucleate assembly of the platform of the 30S subunit by binding and bridging several RNA helices of the 16S rRNA. In terms of biological role, forms an intersubunit bridge (bridge B4) with the 23S rRNA of the 50S subunit in the ribosome. The sequence is that of Small ribosomal subunit protein uS15 from Synechococcus sp. (strain RCC307).